Here is a 53-residue protein sequence, read N- to C-terminus: Large ribosomal subunit protein bL33 (53 aa).

Belongs to the bacterial ribosomal protein bL33 family.

The polypeptide is Large ribosomal subunit protein bL33 (Malacoplasma penetrans (strain HF-2) (Mycoplasma penetrans)).